The sequence spans 398 residues: S-adenosylmethionine synthase (398 aa).

Residue 136-141 (GTGSSD) coordinates ATP.

The protein belongs to the AdoMet synthase 2 family. Requires Mg(2+) as cofactor.

The catalysed reaction is L-methionine + ATP + H2O = S-adenosyl-L-methionine + phosphate + diphosphate. The protein operates within amino-acid biosynthesis; S-adenosyl-L-methionine biosynthesis; S-adenosyl-L-methionine from L-methionine: step 1/1. Catalyzes the formation of S-adenosylmethionine from methionine and ATP. The chain is S-adenosylmethionine synthase from Methanosarcina barkeri (strain Fusaro / DSM 804).